A 390-amino-acid chain; its full sequence is Alkanesulfonate monooxygenase 1 (390 aa).

Positions 364–390 (TGSSVNTGPFGETIAGDHRPKSLASAS) are disordered.

Belongs to the SsuD family.

It catalyses the reaction an alkanesulfonate + FMNH2 + O2 = an aldehyde + FMN + sulfite + H2O + 2 H(+). Functionally, catalyzes the desulfonation of aliphatic sulfonates. This Mesorhizobium japonicum (strain LMG 29417 / CECT 9101 / MAFF 303099) (Mesorhizobium loti (strain MAFF 303099)) protein is Alkanesulfonate monooxygenase 1 (ssuD1).